A 25-amino-acid polypeptide reads, in one-letter code: ATP synthase subunit alpha, mitochondrial (25 aa).

Belongs to the ATPase alpha/beta chains family. In terms of assembly, F-type ATPases have 2 components, CF(1) - the catalytic core - and CF(0) - the membrane proton channel. CF(1) has five subunits: alpha(3), beta(3), gamma(1), delta(1), epsilon(1). CF(0) has three main subunits: a, b and c.

It is found in the mitochondrion. Its subcellular location is the mitochondrion inner membrane. In terms of biological role, mitochondrial membrane ATP synthase (F(1)F(0) ATP synthase or Complex V) produces ATP from ADP in the presence of a proton gradient across the membrane which is generated by electron transport complexes of the respiratory chain. F-type ATPases consist of two structural domains, F(1) - containing the extramembraneous catalytic core, and F(0) - containing the membrane proton channel, linked together by a central stalk and a peripheral stalk. During catalysis, ATP synthesis in the catalytic domain of F(1) is coupled via a rotary mechanism of the central stalk subunits to proton translocation. Subunits alpha and beta form the catalytic core in F(1). Rotation of the central stalk against the surrounding alpha(3)beta(3) subunits leads to hydrolysis of ATP in three separate catalytic sites on the beta subunits. Subunit alpha does not bear the catalytic high-affinity ATP-binding sites. This Spinacia oleracea (Spinach) protein is ATP synthase subunit alpha, mitochondrial (ATPA).